Consider the following 1666-residue polypeptide: Probable clathrin heavy chain (1666 aa).

7 WD40-like repeat regions span residues 24 to 67, 68 to 107, 108 to 148, 149 to 194, 195 to 255, 256 to 299, and 300 to 328; these read SFGF…RPIS, ADSV…MNQD, VVYW…SSLN, GTQI…QPLE, SHAS…PEAV, NDFP…VSGE, and SIFV…VSIN. At T392 the chain carries Phosphothreonine. Position 393 is a phosphoserine (S393). CHCR repeat units lie at residues 534 to 680, 683 to 825, 830 to 969, 975 to 1120, 1124 to 1265, 1270 to 1415, and 1418 to 1561; these read MFNS…QIVV, ATRY…DEEL, LMSV…LLDQ, VPES…IPDA, YLKA…FRLA, LNLI…MLLT, and LAAL…YECF.

The protein belongs to the clathrin heavy chain family. Clathrin triskelions, composed of 3 heavy chains and 3 light chains, are the basic subunits of the clathrin coat.

It is found in the cytoplasmic vesicle membrane. The protein resides in the membrane. The protein localises to the coated pit. Functionally, clathrin is the major protein of the polyhedral coat of coated pits and vesicles. In Schizosaccharomyces pombe (strain 972 / ATCC 24843) (Fission yeast), this protein is Probable clathrin heavy chain (chc1).